The sequence spans 78 residues: Exodeoxyribonuclease 7 small subunit (78 aa).

This sequence belongs to the XseB family. Heterooligomer composed of large and small subunits.

The protein localises to the cytoplasm. It carries out the reaction Exonucleolytic cleavage in either 5'- to 3'- or 3'- to 5'-direction to yield nucleoside 5'-phosphates.. In terms of biological role, bidirectionally degrades single-stranded DNA into large acid-insoluble oligonucleotides, which are then degraded further into small acid-soluble oligonucleotides. The polypeptide is Exodeoxyribonuclease 7 small subunit (Psychromonas ingrahamii (strain DSM 17664 / CCUG 51855 / 37)).